Here is a 1357-residue protein sequence, read N- to C-terminus: DNA-directed RNA polymerase subunit beta (1357 aa).

Belongs to the RNA polymerase beta chain family. In terms of assembly, the RNAP catalytic core consists of 2 alpha, 1 beta, 1 beta' and 1 omega subunit. When a sigma factor is associated with the core the holoenzyme is formed, which can initiate transcription.

It catalyses the reaction RNA(n) + a ribonucleoside 5'-triphosphate = RNA(n+1) + diphosphate. DNA-dependent RNA polymerase catalyzes the transcription of DNA into RNA using the four ribonucleoside triphosphates as substrates. This is DNA-directed RNA polymerase subunit beta from Pseudomonas syringae pv. syringae (strain B728a).